The sequence spans 160 residues: Cyclic pyranopterin monophosphate synthase (160 aa).

Residues 74–76 (LSH) and 112–113 (ME) each bind substrate. Asp-127 is an active-site residue.

The protein belongs to the MoaC family. In terms of assembly, homohexamer; trimer of dimers.

The catalysed reaction is (8S)-3',8-cyclo-7,8-dihydroguanosine 5'-triphosphate = cyclic pyranopterin phosphate + diphosphate. It functions in the pathway cofactor biosynthesis; molybdopterin biosynthesis. Catalyzes the conversion of (8S)-3',8-cyclo-7,8-dihydroguanosine 5'-triphosphate to cyclic pyranopterin monophosphate (cPMP). This is Cyclic pyranopterin monophosphate synthase from Geobacter metallireducens (strain ATCC 53774 / DSM 7210 / GS-15).